The chain runs to 1129 residues: Phytochrome A type 4 (1129 aa).

Residues 1-21 (MSSSRPASSSSSRNRQSSRAR) show a composition bias toward low complexity. Residues 1–24 (MSSSRPASSSSSRNRQSSRARVLA) are disordered. A GAF domain is found at 217-402 (SMEVLCNTVV…VFAVHVNREF (186 aa)). Phytochromobilin is bound at residue Cys322. PAS domains are found at residues 618 to 688 (VTSE…LQGK) and 748 to 822 (VEGD…VSLC). Residues 902 to 1122 (YMRHAINNPL…TFILTAELAS (221 aa)) form the Histidine kinase domain.

This sequence belongs to the phytochrome family. As to quaternary structure, homodimer. In terms of processing, contains one covalently linked phytochromobilin chromophore.

In terms of biological role, regulatory photoreceptor which exists in two forms that are reversibly interconvertible by light: the Pr form that absorbs maximally in the red region of the spectrum and the Pfr form that absorbs maximally in the far-red region. Photoconversion of Pr to Pfr induces an array of morphogenic responses, whereas reconversion of Pfr to Pr cancels the induction of those responses. Pfr controls the expression of a number of nuclear genes including those encoding the small subunit of ribulose-bisphosphate carboxylase, chlorophyll A/B binding protein, protochlorophyllide reductase, rRNA, etc. It also controls the expression of its own gene(s) in a negative feedback fashion. This Avena sativa (Oat) protein is Phytochrome A type 4 (PHYA4).